Consider the following 445-residue polypeptide: Sodium/proton-dependent alanine carrier protein (445 aa).

9 helical membrane-spanning segments follow: residues 41-61, 103-123, 129-149, 159-179, 188-208, 249-269, 304-324, 349-369, and 375-395; these read IAYG…IGAA, AAII…SIAD, FGIP…FTIF, AEIV…AIIA, VFGL…GILG, AFSI…MILF, TLFP…FAFT, AFFA…VKTA, and MGDI…LLLF.

This sequence belongs to the alanine or glycine:cation symporter (AGCS) (TC 2.A.25) family. Post-translationally, the N-terminus is blocked.

The protein resides in the cell membrane. Mediates the active transport of alanine, driven by either an H(+) or Na(+) gradient. In Bacillus sp. (strain PS3), this protein is Sodium/proton-dependent alanine carrier protein.